A 633-amino-acid polypeptide reads, in one-letter code: MNNRGGFSHPPGKFHMRGSKTYTPRNGGQGQGQPQQAAPAFDQQQQQQQQQQQQQQQQQQNFDQQQQQPQQPQQQQGGNNYYFQSKFGNKSHRGGYHGNGNGNNNGNNNNNNTSPNLNSTSHNNNNNNNNNNNNNNNNNNNTHFTNSRGGHRGGSSRGGSSRGGNSGSSRGGSRGGYRGQSSFYNSSYQKSGPRLLTSIVSLPPFSGGAIIGVKGSLWGLLNKATTARLKVFKNTAIIKCADAQQLDRAKEIVLKLKNTSPKYLSLIDYKGEQKIKFVHQPSFSEVILESGAIDPLATDGVQLMQDLINSHESQYVARLNETFSTLYSEKGSSTPFIDIEAGKIWYLHSSNIPSTPMTADKYELYTESLASVFQPSNVINEQFITSSQYKLFKQKKQFTFISVLDTESLDLLCIKCSEEKITPTTTTTTNTQQSPNSDSSEYKFTDPFIYKLNHINSSKVLFPQIKSGSDLRVTIDTHSKSKLVSGTGQHQYDNLIKFIDSIKIHKNSSGNNTYQIPDSNLFMTESIITRKVLMYRSDDNSLQFHVNEDIATRYTTSTPEVNRESTTVFCTSPALYDLFKSKNWTVDQASDELKKLSKNLRLLVSKHLDSTKFQPPSADHTTQFEQDDEEEEN.

Residues methionine 1–tyrosine 188 form a disordered region. 2 stretches are compositionally biased toward low complexity: residues glycine 32–asparagine 80 and asparagine 104–arginine 148. Over residues arginine 152–arginine 178 the composition is skewed to gly residues. The stretch at lysine 580 to histidine 607 forms a coiled coil. A disordered region spans residues threonine 611–asparagine 633.

This is an uncharacterized protein from Dictyostelium discoideum (Social amoeba).